The chain runs to 500 residues: L-arabinose isomerase (500 aa).

Residues Glu306, Glu333, His350, and His450 each coordinate Mn(2+).

It belongs to the arabinose isomerase family. In terms of assembly, homohexamer. Mn(2+) serves as cofactor.

It carries out the reaction beta-L-arabinopyranose = L-ribulose. Its pathway is carbohydrate degradation; L-arabinose degradation via L-ribulose; D-xylulose 5-phosphate from L-arabinose (bacterial route): step 1/3. In terms of biological role, catalyzes the conversion of L-arabinose to L-ribulose. This is L-arabinose isomerase from Salmonella enteritidis PT4 (strain P125109).